A 151-amino-acid polypeptide reads, in one-letter code: Transcriptional regulator MraZ (151 aa).

SpoVT-AbrB domains follow at residues 5 to 52 and 81 to 124; these read ATAV…PLDE and ATEC…SDVE.

Belongs to the MraZ family. Forms oligomers.

The protein resides in the cytoplasm. Its subcellular location is the nucleoid. The protein is Transcriptional regulator MraZ of Haemophilus influenzae (strain 86-028NP).